The sequence spans 475 residues: Aspartyl/glutamyl-tRNA(Asn/Gln) amidotransferase subunit B (475 aa).

This sequence belongs to the GatB/GatE family. GatB subfamily. In terms of assembly, heterotrimer of A, B and C subunits.

The enzyme catalyses L-glutamyl-tRNA(Gln) + L-glutamine + ATP + H2O = L-glutaminyl-tRNA(Gln) + L-glutamate + ADP + phosphate + H(+). It carries out the reaction L-aspartyl-tRNA(Asn) + L-glutamine + ATP + H2O = L-asparaginyl-tRNA(Asn) + L-glutamate + ADP + phosphate + 2 H(+). In terms of biological role, allows the formation of correctly charged Asn-tRNA(Asn) or Gln-tRNA(Gln) through the transamidation of misacylated Asp-tRNA(Asn) or Glu-tRNA(Gln) in organisms which lack either or both of asparaginyl-tRNA or glutaminyl-tRNA synthetases. The reaction takes place in the presence of glutamine and ATP through an activated phospho-Asp-tRNA(Asn) or phospho-Glu-tRNA(Gln). The chain is Aspartyl/glutamyl-tRNA(Asn/Gln) amidotransferase subunit B from Macrococcus caseolyticus (strain JCSC5402) (Macrococcoides caseolyticum).